The primary structure comprises 266 residues: UPF0294 protein YafD (266 aa).

The protein belongs to the UPF0294 family.

The protein localises to the cytoplasm. The protein is UPF0294 protein YafD of Salmonella agona (strain SL483).